The chain runs to 525 residues: GMP synthase [glutamine-hydrolyzing] (525 aa).

The Glutamine amidotransferase type-1 domain maps to 9–207; it reads RILILDFGSQ…VKEICHCEAL (199 aa). The active-site Nucleophile is Cys-86. Active-site residues include His-181 and Glu-183. Residues 208 to 400 form the GMPS ATP-PPase domain; it reads WTPATIIEDA…LGLPYNMLYR (193 aa). 235–241 lines the ATP pocket; that stretch reads SGGVDSS.

In terms of assembly, homodimer.

The catalysed reaction is XMP + L-glutamine + ATP + H2O = GMP + L-glutamate + AMP + diphosphate + 2 H(+). It functions in the pathway purine metabolism; GMP biosynthesis; GMP from XMP (L-Gln route): step 1/1. In terms of biological role, catalyzes the synthesis of GMP from XMP. This chain is GMP synthase [glutamine-hydrolyzing], found in Tolumonas auensis (strain DSM 9187 / NBRC 110442 / TA 4).